A 155-amino-acid chain; its full sequence is uncharacterized protein (155 aa).

The first 21 residues, 1–21, serve as a signal peptide directing secretion; sequence MFFIVAAGFVIAALIAAIGMA. Residues 35–155 form a disordered region; the sequence is GQTKPATTRP…PVYRPPEEMV (121 aa). Residues 118 to 128 are compositionally biased toward polar residues; it reads ATASNTPQNEA.

This is an uncharacterized protein from Schizosaccharomyces pombe (strain 972 / ATCC 24843) (Fission yeast).